The sequence spans 80 residues: CLAVATA3/ESR (CLE)-related protein 40 (80 aa).

A signal peptide spans 1–25 (MAAMKYKGSVFIILVILLLSSSLLA). Residues 45 to 80 (MKKEKKIDGGTANEVEERQVPTGSDPLHHKHIPFTP) are disordered. Pro-65 carries the post-translational modification Hydroxyproline.

Belongs to the CLV3/ESR signal peptide family. As to expression, mostly expressed at low levels in stems and apex, and, to a lower extent, in roots, seedlings, leaves, flowers, siliques and pollen.

Its subcellular location is the secreted. It localises to the extracellular space. Extracellular signal peptide secreted by differentiated root cells that regulates root cell fate. Acts with ACR4 as a ligand-receptor pair in a signal transduction pathway, coordinating movement of the root tip and organization of cell divisions in the root meristem. Promotes cell differentiation in the distal root meristem in a dose-dependent manner, especially the transition from columella stem cells (CSC) daughters into columella cells (CCs). Induces ACR4 expression in root quiescent center (QC). Involved in WUX5 QC-specific expression pattern regulation. Regulates the transition of protophloem cells from proliferation to differentiation, thus impinging on postembryonic growth capacity of the root meristem; this signaling pathway requires CRN and CLV2. In Arabidopsis thaliana (Mouse-ear cress), this protein is CLAVATA3/ESR (CLE)-related protein 40.